The primary structure comprises 827 residues: Beta-galactosidase 1 (827 aa).

The N-terminal stretch at 1 to 25 (MMGRRGSSWCRWWVALLVLAVAADA) is a signal peptide. The active-site Proton donor is the glutamate 187. 2 N-linked (GlcNAc...) asparagine glycosylation sites follow: asparagine 198 and asparagine 249. Glutamate 259 acts as the Nucleophile in catalysis. 8 N-linked (GlcNAc...) asparagine glycosylation sites follow: asparagine 260, asparagine 366, asparagine 392, asparagine 502, asparagine 520, asparagine 578, asparagine 586, and asparagine 615. Residues 746–827 (GEAGDAVTLS…SGVLTVQATC (82 aa)) enclose the SUEL-type lectin domain.

Belongs to the glycosyl hydrolase 35 family.

The protein resides in the secreted. The protein localises to the extracellular space. It is found in the apoplast. It catalyses the reaction Hydrolysis of terminal non-reducing beta-D-galactose residues in beta-D-galactosides.. The sequence is that of Beta-galactosidase 1 from Oryza sativa subsp. japonica (Rice).